A 494-amino-acid polypeptide reads, in one-letter code: Amidophosphoribosyltransferase (494 aa).

A propeptide spanning residues 1 to 10 (MFNYSGLNEE) is cleaved from the precursor. C11 acts as the Nucleophile in catalysis. The region spanning 11-231 (CGVFGIWNHP…AGEYVVINDK (221 aa)) is the Glutamine amidotransferase type-2 domain. Residues S294, D356, and D357 each contribute to the Mg(2+) site.

In the C-terminal section; belongs to the purine/pyrimidine phosphoribosyltransferase family. Mg(2+) serves as cofactor.

It carries out the reaction 5-phospho-beta-D-ribosylamine + L-glutamate + diphosphate = 5-phospho-alpha-D-ribose 1-diphosphate + L-glutamine + H2O. Its pathway is purine metabolism; IMP biosynthesis via de novo pathway; N(1)-(5-phospho-D-ribosyl)glycinamide from 5-phospho-alpha-D-ribose 1-diphosphate: step 1/2. Its function is as follows. Catalyzes the formation of phosphoribosylamine from phosphoribosylpyrophosphate (PRPP) and glutamine. This Staphylococcus aureus (strain Mu50 / ATCC 700699) protein is Amidophosphoribosyltransferase.